Reading from the N-terminus, the 443-residue chain is Endothelin receptor type B (443 aa).

Residues 1 to 26 (MQPLPTLCGRVLVALILACGVAGVQG) form the signal peptide. Residues 27-102 (EERRFPPARA…RTIEIKETFK (76 aa)) are Extracellular-facing. A compositionally biased stretch (polar residues) spans 51 to 62 (TKTSWPTGSNAS). The tract at residues 51–89 (TKTSWPTGSNASVPRLSAPPQMPKAGRTAGAQRRTLPPP) is disordered. N-linked (GlcNAc...) asparagine glycosylation is present at asparagine 60. A helical membrane pass occupies residues 103-127 (YINTVVSCLVFVLGIIGNSTLLRII). Residues 128–138 (YKNKCMRNGPN) lie on the Cytoplasmic side of the membrane. A helical transmembrane segment spans residues 139–164 (ILIASLALGDLLHIIIDIPINVYKLL). Residues 165–176 (AEDWPFGVEMCK) lie on the Extracellular side of the membrane. Cysteine 175 and cysteine 256 are disulfide-bonded. A helical membrane pass occupies residues 177-198 (LVPFIQKASVGITVLSLCALSI). The Cytoplasmic portion of the chain corresponds to 199–219 (DRYRAVASWSRIKGIGVPKWT). Residues 220–244 (AVEIVLIWVVSVVLAVPEAVGFDMI) traverse the membrane as a helical segment. Over 245–272 (TADYKGSYLRICLLHPTQKTAFMQFYKN) the chain is Extracellular. Residues 273 to 297 (AKDWWLFSFYFCLPLAITAFFYTLE) form a helical membrane-spanning segment. The Cytoplasmic portion of the chain corresponds to 298 to 325 (TCEMLRKKSGMQIALNDHLKQRREVAKT). Serine 306 carries the phosphoserine modification. Residues 326–351 (VFCLVLVFALCWLPLHLSRILKHTLY) traverse the membrane as a helical segment. Over 352–363 (DQNDPHRCELLS) the chain is Extracellular. A helical membrane pass occupies residues 364–390 (FLLVLEYIGINMASLNSCINPIALYLV). At 391–443 (SKRFKNCFKWCLCCWCQSFEEKQSLEDKQSCLKFKANDHGYDNFRSSNKYSSS) the chain is on the cytoplasmic side. S-palmitoyl cysteine attachment occurs at residues cysteine 403, cysteine 404, and cysteine 406. Residue serine 420 is modified to Phosphoserine. A Phosphotyrosine modification is found at tyrosine 440. Residues serine 441, serine 442, and serine 443 each carry the phosphoserine modification.

It belongs to the G-protein coupled receptor 1 family. Endothelin receptor subfamily. EDNRB sub-subfamily.

The protein resides in the cell membrane. Functionally, non-specific receptor for endothelin 1, 2, and 3. Mediates its action by association with G proteins that activate a phosphatidylinositol-calcium second messenger system. In Equus caballus (Horse), this protein is Endothelin receptor type B (EDNRB).